The chain runs to 230 residues: Interleukin-6 (230 aa).

An N-terminal signal peptide occupies residues 1-24; the sequence is MASKHNADLSSAAMLAALLLCALG. Cys-96 and Cys-106 are oxidised to a cystine. Asn-100 carries N-linked (GlcNAc...) asparagine glycosylation. Residues 206 to 218 show a composition bias toward basic and acidic residues; sequence REMPKQKRRKDDG. Residues 206–230 form a disordered region; the sequence is REMPKQKRRKDDGIIPPIHPSYQMT.

The protein belongs to the IL-6 superfamily. Component of a hexamer of two molecules each of IL6, IL6R and IL6ST; first binds to IL6R to associate with the signaling subunit IL6ST. Expressed in kidney and spleen. Low expression in liver and gills.

It localises to the secreted. Functionally, cytokine with a wide variety of biological functions in immunity, tissue regeneration, and metabolism. Binds to IL6R, then the complex associates to the signaling subunit IL6ST/gp130 to trigger the intracellular IL6-signaling pathway. The interaction with the membrane-bound IL6R and IL6ST stimulates 'classic signaling', whereas the binding of IL6 and soluble IL6R to IL6ST stimulates 'trans-signaling'. Alternatively, 'cluster signaling' occurs when membrane-bound IL6:IL6R complexes on transmitter cells activate IL6ST receptors on neighboring receiver cells. In Paralichthys olivaceus (Bastard halibut), this protein is Interleukin-6 (il6).